A 159-amino-acid polypeptide reads, in one-letter code: Transcription elongation factor GreA (159 aa).

Positions 14–76 (IKKLENELEY…QLENMLKNAS (63 aa)) form a coiled coil.

Belongs to the GreA/GreB family.

In terms of biological role, necessary for efficient RNA polymerase transcription elongation past template-encoded arresting sites. The arresting sites in DNA have the property of trapping a certain fraction of elongating RNA polymerases that pass through, resulting in locked ternary complexes. Cleavage of the nascent transcript by cleavage factors such as GreA or GreB allows the resumption of elongation from the new 3'terminus. GreA releases sequences of 2 to 3 nucleotides. This Clostridium kluyveri (strain NBRC 12016) protein is Transcription elongation factor GreA.